Consider the following 98-residue polypeptide: Large ribosomal subunit protein uL23 (98 aa).

This sequence belongs to the universal ribosomal protein uL23 family. In terms of assembly, part of the 50S ribosomal subunit. Contacts protein L29, and trigger factor when it is bound to the ribosome.

In terms of biological role, one of the early assembly proteins it binds 23S rRNA. One of the proteins that surrounds the polypeptide exit tunnel on the outside of the ribosome. Forms the main docking site for trigger factor binding to the ribosome. The polypeptide is Large ribosomal subunit protein uL23 (Borrelia garinii subsp. bavariensis (strain ATCC BAA-2496 / DSM 23469 / PBi) (Borreliella bavariensis)).